Reading from the N-terminus, the 288-residue chain is Pantothenate synthetase (288 aa).

Residue 30–37 (MGNLHAGH) participates in ATP binding. Residue His37 is the Proton donor of the active site. Gln61 is a (R)-pantoate binding site. Beta-alanine is bound at residue Gln61. ATP is bound at residue 149–152 (GLKD). A (R)-pantoate-binding site is contributed by Gln155. Residues Ile178 and 186–189 (LSSR) contribute to the ATP site.

This sequence belongs to the pantothenate synthetase family. Homodimer.

It localises to the cytoplasm. The catalysed reaction is (R)-pantoate + beta-alanine + ATP = (R)-pantothenate + AMP + diphosphate + H(+). It participates in cofactor biosynthesis; (R)-pantothenate biosynthesis; (R)-pantothenate from (R)-pantoate and beta-alanine: step 1/1. In terms of biological role, catalyzes the condensation of pantoate with beta-alanine in an ATP-dependent reaction via a pantoyl-adenylate intermediate. This is Pantothenate synthetase from Colwellia psychrerythraea (strain 34H / ATCC BAA-681) (Vibrio psychroerythus).